A 572-amino-acid polypeptide reads, in one-letter code: MAEEAKAKGNAAFSAGDFAAAVRHFSDAIALSPSNHVLYSNRSAAHASLQNYAEALADAQKTVDLKPDWPKAYSRLGAAHLGLRRHRDAFSAYKTGLQLDPDNAALKSGLADAQAAASRPPPTSPFATAFSGPDMWARLTADPTARANLQDPEFVKIMQDIQKDPNKFNLHLSDQRVMHAIGVLLNVKIQTPNHDENDHDADDDVSEDEVVSQPEPEHEPEAAVEVAEEEEEEEKETRDRKGQAQKEKEAGNAAYKKKDFETAIGHYSKALELDDEDISYLTNRAAVYLEMGKFEDCIKDCEKAVERGKELRSDYKMIARALTRKGTALAKMAKCSKDFEPAIEIFQKALTENRNPDTLKKLNEAEKAKKELEQQEYFDPKLADEAREKGNELFKQQKYPEATKHYTEAIKRNPKDAKAYSNRAACYTKLGAMPEGLKDAEKCIELDPTFSKGYTRKGAVQFSMKEYDKALETYREGLKHDPNNQELLDGIRRCVEQINKASRGDFTPEELKERQAKAMQDPEIQSILQDPVMTQVLTDFQENPRAAEEHVKNPMVMNKIQKLISAGIVQMR.

TPR repeat units follow at residues 2-35, 37-69, and 70-103; these read AEEAKAKGNAAFSAGDFAAAVRHFSDAIALSPSN, VLYSNRSAAHASLQNYAEALADAQKTVDLKPDW, and PKAYSRLGAAHLGLRRHRDAFSAYKTGLQLDPDN. One can recognise an STI1 1 domain in the interval 142–181; that stretch reads DPTARANLQDPEFVKIMQDIQKDPNKFNLHLSDQRVMHAI. The disordered stretch occupies residues 192–253; sequence PNHDENDHDA…AQKEKEAGNA (62 aa). The segment covering 198-210 has biased composition (acidic residues); that stretch reads DHDADDDVSEDEV. The span at 235-253 shows a compositional bias: basic and acidic residues; that stretch reads KETRDRKGQAQKEKEAGNA. The short motif at 241-258 is the Bipartite nuclear localization signal element; the sequence is KGQAQKEKEAGNAAYKKK. TPR repeat units lie at residues 244-277, 279-311, 319-356, 383-416, 417-450, and 451-484; these read AQKEKEAGNAAYKKKDFETAIGHYSKALELDDED, SYLTNRAAVYLEMGKFEDCIKDCEKAVERGKEL, ARALTRKGTALAKMAKCSKDFEPAIEIFQKALTENRNP, ADEAREKGNELFKQQKYPEATKHYTEAIKRNPKD, AKAYSNRAACYTKLGAMPEGLKDAEKCIELDPTF, and SKGYTRKGAVQFSMKEYDKALETYREGLKHDPNN. Positions 521 to 560 constitute an STI1 2 domain; it reads DPEIQSILQDPVMTQVLTDFQENPRAAEEHVKNPMVMNKI.

In terms of assembly, co-chaperone that forms a complex with HSP70 and HSP90 and preproteins (e.g. chloroplast preproteins). Interacts with HSP90. Phosphorylated. In terms of processing, acetylated. Expressed ubiquitously, with maximal expression in cotyledons, followed by shoots and flowers.

It localises to the cytoplasm. Its subcellular location is the nucleus. Its function is as follows. Mediates nuclear encoded chloroplast preproteins binding to HSP90 prior to chloroplastic sorting. Mediates the association of the molecular chaperones HSP70 and HSP90. In Glycine max (Soybean), this protein is Hsp70-Hsp90 organizing protein 1 (HOP1).